Reading from the N-terminus, the 224-residue chain is Small ribosomal subunit protein uS3 (224 aa).

A KH type-2 domain is found at 38–106; sequence LREYVKEKLG…EVYLNVVEVR (69 aa).

The protein belongs to the universal ribosomal protein uS3 family. As to quaternary structure, part of the 30S ribosomal subunit. Forms a tight complex with proteins S10 and S14.

Functionally, binds the lower part of the 30S subunit head. Binds mRNA in the 70S ribosome, positioning it for translation. In Anaeromyxobacter sp. (strain Fw109-5), this protein is Small ribosomal subunit protein uS3.